We begin with the raw amino-acid sequence, 171 residues long: Apoptosis regulator Bcl-2 homolog (171 aa).

Interacts with host BECN1; this interaction inhibits host autophagy. Interacts with host BAK1 and BAX.

Its subcellular location is the host cytoplasm. Plays a role in the protection against apoptosis mediated by cytotoxic cells during the immune response to acute and persistent viral infection. Contributes therefore to latency establishment. Plays also a role in the inhibition of host starvation-induced autophagy which ultimately contributes to the viral chronic infection. The sequence is that of Apoptosis regulator Bcl-2 homolog (vBCL2) from Murid herpesvirus 4 (MuHV-4).